We begin with the raw amino-acid sequence, 294 residues long: Phosphatidylglycerol--prolipoprotein diacylglyceryl transferase (294 aa).

A run of 7 helical transmembrane segments spans residues 21-41 (VSLH…LWLA), 60-80 (LLYV…VLFY), 96-116 (WDGG…MIWF), 124-144 (FFQV…LGRI), 199-219 (SQLY…NIFV), 226-246 (GSVS…VEFF), and 259-279 (ISMG…FMVW). Arginine 143 is an a 1,2-diacyl-sn-glycero-3-phospho-(1'-sn-glycerol) binding site.

This sequence belongs to the Lgt family.

The protein resides in the cell inner membrane. The catalysed reaction is L-cysteinyl-[prolipoprotein] + a 1,2-diacyl-sn-glycero-3-phospho-(1'-sn-glycerol) = an S-1,2-diacyl-sn-glyceryl-L-cysteinyl-[prolipoprotein] + sn-glycerol 1-phosphate + H(+). Its pathway is protein modification; lipoprotein biosynthesis (diacylglyceryl transfer). In terms of biological role, catalyzes the transfer of the diacylglyceryl group from phosphatidylglycerol to the sulfhydryl group of the N-terminal cysteine of a prolipoprotein, the first step in the formation of mature lipoproteins. This is Phosphatidylglycerol--prolipoprotein diacylglyceryl transferase from Proteus mirabilis (strain HI4320).